Consider the following 485-residue polypeptide: Palmitoyltransferase ZDHHC1 (485 aa).

The disordered stretch occupies residues 1–41; it reads MYKMNICNKPSNKTAPEKSVWTAPAQPSGPSPELQGQRSRR. At 1-52 the chain is on the cytoplasmic side; the sequence is MYKMNICNKPSNKTAPEKSVWTAPAQPSGPSPELQGQRSRRNGWSWPPHPLQ. Positions 1-271 are mediates interaction with STING1; sequence MYKMNICNKP…GHLLCFHIYL (271 aa). A helical transmembrane segment spans residues 53–73; it reads IVAWLLYLFFAVIGFGILVPL. Residues 74-77 lie on the Lumenal side of the membrane; that stretch reads LPHH. The chain crosses the membrane as a helical span at residues 78–98; it reads WVPAGYACMGAIFAGHLVVHL. Over 99–185 the chain is Cytoplasmic; sequence TAVSIDPADA…YRLFLHSVAS (87 aa). Residues 134–184 form the DHHC domain; the sequence is LHCNLCNVDVSARSKHCSACNKCVCGFDHHCKWLNNCVGERNYRLFLHSVA. Cysteine 164 serves as the catalytic S-palmitoyl cysteine intermediate. The helical transmembrane segment at 186–206 threads the bilayer; that stretch reads ALLGVLLLVLVATYVFVEFFV. Over 207–241 the chain is Lumenal; it reads NPMRLRTNRHFEVLKNHTDVWFVFLPAAPVETQAP. Residues 242-262 traverse the membrane as a helical segment; sequence AILALAALLILLGLLSTALLG. At 263-485 the chain is on the cytoplasmic side; it reads HLLCFHIYLM…RGRRVRPPFS (223 aa). 2 disordered regions span residues 324–358 and 462–485; these read EPPGQAGPAAVNAKHSRPASPDPTPGRRDCAGPPV and LWPPRGAGADSPRWRGRRVRPPFS. Basic residues predominate over residues 475–485; the sequence is WRGRRVRPPFS.

Belongs to the DHHC palmitoyltransferase family. Interacts with STING1; ZDHHC1 constitutively interacts with STING1 and in presence of DNA viruses activates it by promoting its cGAMP-induced oligomerization and the recruitment of downstream signaling components. Widely expressed with significant expression in heart, brain, placenta, lung, liver, kidney, testis, thymus and small intestine. Expressed at lower levels in adult pancreas and lung.

The protein resides in the endosome membrane. Its subcellular location is the endoplasmic reticulum membrane. It localises to the golgi apparatus. It carries out the reaction L-cysteinyl-[protein] + hexadecanoyl-CoA = S-hexadecanoyl-L-cysteinyl-[protein] + CoA. Functionally, palmitoyltransferase that catalyzes the addition of palmitate onto various protein substrates, such as NCDN and NLRP3. Has a palmitoyltransferase activity toward NCDN and regulates NCDN association with endosome membranes through this palmitoylation. Acts as an activator of the NLRP3 inflammasome by mediating palmitoylation of 'Cys-130' and 'Cys-958' of NLRP3, thereby promoting NLRP3 phosphorylation and activation by NEK7. Its function is as follows. Also has a palmitoyltransferase activity-independent function in DNA virus-triggered and CGAS-mediated innate immune response. Functions as an activator of STING1 by promoting its cGAMP-induced oligomerization and the recruitment of downstream signaling components. The sequence is that of Palmitoyltransferase ZDHHC1 from Homo sapiens (Human).